We begin with the raw amino-acid sequence, 86 residues long: Small ribosomal subunit protein bS18 (86 aa).

It belongs to the bacterial ribosomal protein bS18 family. As to quaternary structure, part of the 30S ribosomal subunit. Forms a tight heterodimer with protein bS6.

Binds as a heterodimer with protein bS6 to the central domain of the 16S rRNA, where it helps stabilize the platform of the 30S subunit. This chain is Small ribosomal subunit protein bS18, found in Heliobacterium modesticaldum (strain ATCC 51547 / Ice1).